Here is a 641-residue protein sequence, read N- to C-terminus: 1-deoxy-D-xylulose-5-phosphate synthase (641 aa).

Residues histidine 79 and 120-122 contribute to the thiamine diphosphate site; that span reads GHS. Aspartate 151 is a binding site for Mg(2+). Thiamine diphosphate is bound by residues 152 to 153, asparagine 180, tyrosine 290, and glutamate 372; that span reads GS. Asparagine 180 lines the Mg(2+) pocket.

This sequence belongs to the transketolase family. DXPS subfamily. Homodimer. Mg(2+) is required as a cofactor. It depends on thiamine diphosphate as a cofactor.

It carries out the reaction D-glyceraldehyde 3-phosphate + pyruvate + H(+) = 1-deoxy-D-xylulose 5-phosphate + CO2. It functions in the pathway metabolic intermediate biosynthesis; 1-deoxy-D-xylulose 5-phosphate biosynthesis; 1-deoxy-D-xylulose 5-phosphate from D-glyceraldehyde 3-phosphate and pyruvate: step 1/1. In terms of biological role, catalyzes the acyloin condensation reaction between C atoms 2 and 3 of pyruvate and glyceraldehyde 3-phosphate to yield 1-deoxy-D-xylulose-5-phosphate (DXP). The chain is 1-deoxy-D-xylulose-5-phosphate synthase from Rhodopseudomonas palustris (strain TIE-1).